We begin with the raw amino-acid sequence, 275 residues long: 4-hydroxy-tetrahydrodipicolinate reductase (275 aa).

NAD(+)-binding positions include 13 to 18 and 108 to 110; these read GAAGKM and GTT. Histidine 164 (proton donor/acceptor) is an active-site residue. Histidine 165 serves as a coordination point for (S)-2,3,4,5-tetrahydrodipicolinate. The Proton donor role is filled by lysine 168. Residue 174–175 participates in (S)-2,3,4,5-tetrahydrodipicolinate binding; the sequence is GT.

It belongs to the DapB family.

The protein localises to the cytoplasm. It catalyses the reaction (S)-2,3,4,5-tetrahydrodipicolinate + NAD(+) + H2O = (2S,4S)-4-hydroxy-2,3,4,5-tetrahydrodipicolinate + NADH + H(+). It carries out the reaction (S)-2,3,4,5-tetrahydrodipicolinate + NADP(+) + H2O = (2S,4S)-4-hydroxy-2,3,4,5-tetrahydrodipicolinate + NADPH + H(+). It functions in the pathway amino-acid biosynthesis; L-lysine biosynthesis via DAP pathway; (S)-tetrahydrodipicolinate from L-aspartate: step 4/4. In terms of biological role, catalyzes the conversion of 4-hydroxy-tetrahydrodipicolinate (HTPA) to tetrahydrodipicolinate. This is 4-hydroxy-tetrahydrodipicolinate reductase from Rippkaea orientalis (strain PCC 8801 / RF-1) (Cyanothece sp. (strain PCC 8801)).